The chain runs to 290 residues: uncharacterized protein (290 aa).

The disordered stretch occupies residues 153 to 178; that stretch reads EMVPITTSSTTPRSKGDEATSTGAFP. A compositionally biased stretch (polar residues) spans 157-178; the sequence is ITTSSTTPRSKGDEATSTGAFP. A helical membrane pass occupies residues 202 to 222; it reads LIAVTLLLGGAAIIVFVIFEV. Positions 246 to 276 are disordered; sequence KEEDQKPGTTESQLDSQPEKVKHNVPNSSDS. Residues 252-261 are compositionally biased toward polar residues; it reads PGTTESQLDS.

Its subcellular location is the membrane. This is an uncharacterized protein from Mus musculus (Mouse).